A 431-amino-acid chain; its full sequence is Large envelope protein (431 aa).

Residue glycine 2 is the site of N-myristoyl glycine; by host attachment. The segment at 2 to 148 is pre-S1; that stretch reads GNNIKVTFNP…PPLRDTHPHL (147 aa). The interval 2-207 is pre-S; that stretch reads GNNIKVTFNP…PSTTGDPALS (206 aa). Residues 2–214 are Virion surface; in external conformation-facing; it reads GNNIKVTFNP…ALSPEMSPSS (213 aa). Over 2-286 the chain is Intravirion; in internal conformation; sequence GNNIKVTFNP…NGFRWMYLRR (285 aa). N-linked (GlcNAc...) asparagine glycosylation is present at asparagine 3. Residues 115–147 are disordered; the sequence is IPRGLVPPQTPTNRDQGRKPTPPTPPLRDTHPH. Residues 149–207 are pre-S2; the sequence is TMKNQTFHLQGFVDGLRDLTTTERQHNAYRDPFTTLSPAVPTVSTILSPPSTTGDPALS. A helical transmembrane segment spans residues 215 to 235; the sequence is LLGLLAGLQVVYFLWTKILTI. Topologically, residues 236–286 are intravirion; in external conformation; that stretch reads AQNLDWWCTSLSFPGGIPECTGQNSQFQTCKHLPTSCPPTCNGFRWMYLRR. Residues 287 to 307 traverse the membrane as a helical segment; it reads FIIYLLVLLLCLIFLLVLLDW. Topologically, residues 308 to 379 are virion surface; the sequence is KGLIPVCPLQ…WALARLSWLN (72 aa). Asparagine 351 carries an N-linked (GlcNAc...) asparagine; by host glycan. The helical transmembrane segment at 380 to 400 threads the bilayer; sequence LLVPLLQWLGGISLIAWFLLI. At 401-406 the chain is on the intravirion side; the sequence is WMIWFW. Residues 407–429 form a helical membrane-spanning segment; sequence GPALLSILPPFIPIFVLFFLIWV. Residues 430–431 are Virion surface-facing; that stretch reads YI.

Belongs to the orthohepadnavirus major surface antigen family. In its internal form (Li-HBsAg), interacts with the capsid protein and with the isoform S. Interacts with host chaperone CANX. As to quaternary structure, associates with host chaperone CANX through its pre-S2 N glycan; this association may be essential for isoform M proper secretion. In terms of assembly, interacts with isoform L. Interacts with the antigens of satellite virus HDV (HDVAgs); this interaction is required for encapsidation of HDV genomic RNA. Isoform M is N-terminally acetylated by host at a ratio of 90%, and N-glycosylated by host at the pre-S2 region. Post-translationally, myristoylated.

The protein resides in the virion membrane. In terms of biological role, the large envelope protein exists in two topological conformations, one which is termed 'external' or Le-HBsAg and the other 'internal' or Li-HBsAg. In its external conformation the protein attaches the virus to cell receptors and thereby initiating infection. This interaction determines the species specificity and liver tropism. This attachment induces virion internalization predominantly through caveolin-mediated endocytosis. The large envelope protein also assures fusion between virion membrane and endosomal membrane. In its internal conformation the protein plays a role in virion morphogenesis and mediates the contact with the nucleocapsid like a matrix protein. The middle envelope protein plays an important role in the budding of the virion. It is involved in the induction of budding in a nucleocapsid independent way. In this process the majority of envelope proteins bud to form subviral lipoprotein particles of 22 nm of diameter that do not contain a nucleocapsid. The chain is Large envelope protein from Marmota monax (Woodchuck).